We begin with the raw amino-acid sequence, 101 residues long: Trp operon repressor homolog (101 aa).

Residues Gln-59–Leu-82 mediate DNA binding.

The protein belongs to the TrpR family. Homodimer.

It localises to the cytoplasm. Its function is as follows. This protein is an aporepressor. When complexed with L-tryptophan it binds the operator region of the trp operon and prevents the initiation of transcription. The sequence is that of Trp operon repressor homolog from Mannheimia succiniciproducens (strain KCTC 0769BP / MBEL55E).